A 401-amino-acid chain; its full sequence is Phosphoglycerate kinase (401 aa).

Substrate is bound by residues 20 to 22 (DFN), R35, 58 to 61 (HLGR), R117, and R154. Residues K204, G298, E329, and 358–361 (GGDS) contribute to the ATP site.

The protein belongs to the phosphoglycerate kinase family. In terms of assembly, monomer.

The protein localises to the cytoplasm. It catalyses the reaction (2R)-3-phosphoglycerate + ATP = (2R)-3-phospho-glyceroyl phosphate + ADP. It participates in carbohydrate degradation; glycolysis; pyruvate from D-glyceraldehyde 3-phosphate: step 2/5. This is Phosphoglycerate kinase from Bifidobacterium longum (strain NCC 2705).